The primary structure comprises 21 residues: Venom peptide Ocy4 (21 aa).

Expressed by the venom gland.

It localises to the secreted. This chain is Venom peptide Ocy4, found in Opisthacanthus cayaporum (South American scorpion).